We begin with the raw amino-acid sequence, 581 residues long: Leucine-rich repeat transmembrane neuronal protein 3 (581 aa).

The first 30 residues, 1 to 30 (MGFNVIRLLSGSAVALVIAPTVLLTMLSSA), serve as a signal peptide directing secretion. Positions 31-61 (ERGCPKGCRCEGKMVYCESQKLQEIPSSISA) constitute an LRRNT domain. Topologically, residues 31–419 (ERGCPKGCRC…ADAEHISFHK (389 aa)) are extracellular. LRR repeat units follow at residues 63–83 (CLGLSLRYNSLQKLKYNQFKG), 86–107 (QLTWLYLDHNHISNIDENAFNG), 110–131 (RLKELILSSNRISYFLNNTFRP), 134–155 (NLRNLDLSYNQLHSLGSEQFRG), 158–179 (KLLSLHLRSNSLRTIPVRIFQD), 182–203 (NLELLDLGYNRIRSLARNVFAG), 206–226 (RLKELHLEHNQFSKLNLALFP), 230–251 (SLQNLYLQWNKISVIGQTMSWT), 254–275 (SLQRLDLSGNEIEAFSGPSVFQ), and 279–300 (NLQRLNLDSNKLTFIGQEILDS). Residue Asn-126 is glycosylated (N-linked (GlcNAc...) asparagine). The region spanning 312–363 (NIWECSRNICSLVNWLKSFKGLRENTIICASPKELQGVNVIDAVKNYSICGK) is the LRRCT domain. A glycan (N-linked (GlcNAc...) asparagine) is linked at Asn-357. The segment at 377-408 (KPTFKPKLPRPKHESKPPLPPTVGATEPGPET) is disordered. The chain crosses the membrane as a helical span at residues 420–440 (IIAGSVALFLSVLVILLVIYV). Residues 441–581 (SWKRYPASMK…RISDHKQQLA (141 aa)) are Cytoplasmic-facing.

It belongs to the LRRTM family. In terms of tissue distribution, expressed in neuronal tissues.

It localises to the cell membrane. Its subcellular location is the postsynaptic cell membrane. In terms of biological role, exhibits a limited synaptogenic activity in vitro, restricted to excitatory presynaptic differentiation. May play a role in the development and maintenance of the vertebrate nervous system. This Homo sapiens (Human) protein is Leucine-rich repeat transmembrane neuronal protein 3 (LRRTM3).